The sequence spans 1409 residues: Copia protein (1409 aa).

The CCHC-type zinc finger occupies 230-247; sequence VKCHHCGREGHIKKDCFH. The active-site For protease activity is aspartate 292. Residues 476 to 644 form the Integrase catalytic domain; sequence HIKRPLFVVH…TPYEMWHNKK (169 aa). Disordered regions lie at residues 760-780 and 805-851; these read SKES…QTEF and NESK…NDGI. Basic and acidic residues predominate over residues 827-841; the sequence is ESRESETAEHLKEIG.

The chain is Copia protein (GIP) from Drosophila melanogaster (Fruit fly).